The chain runs to 223 residues: Uridylate kinase (223 aa).

Position 9–10 (9–10) interacts with ATP; that stretch reads GS. Residue glycine 42 coordinates UMP. ATP contacts are provided by glycine 43 and arginine 47. Residues aspartate 64 and 112 to 118 each bind UMP; that span reads VSPGQTT. Residues threonine 138, tyrosine 144, and aspartate 147 each coordinate ATP.

This sequence belongs to the UMP kinase family. In terms of assembly, homohexamer.

It localises to the cytoplasm. It catalyses the reaction UMP + ATP = UDP + ADP. It functions in the pathway pyrimidine metabolism; CTP biosynthesis via de novo pathway; UDP from UMP (UMPK route): step 1/1. Inhibited by UTP. Functionally, catalyzes the reversible phosphorylation of UMP to UDP. The chain is Uridylate kinase from Methanothrix thermoacetophila (strain DSM 6194 / JCM 14653 / NBRC 101360 / PT) (Methanosaeta thermophila).